A 481-amino-acid chain; its full sequence is GTPase Der (481 aa).

2 consecutive EngA-type G domains span residues 47 to 210 (PVLA…PDVS) and 221 to 394 (RRVA…ESWE). GTP contacts are provided by residues 53–60 (GRPNVGKS), 100–104 (DTGGW), 162–165 (NKVD), 227–234 (GRPNVGKS), 274–278 (DTAGI), and 339–342 (NKWD). The KH-like domain occupies 395-477 (TRIPTGKFNA…PIVLNMRVRE (83 aa)).

It belongs to the TRAFAC class TrmE-Era-EngA-EngB-Septin-like GTPase superfamily. EngA (Der) GTPase family. Associates with the 50S ribosomal subunit.

Functionally, GTPase that plays an essential role in the late steps of ribosome biogenesis. The sequence is that of GTPase Der from Leifsonia xyli subsp. xyli (strain CTCB07).